The sequence spans 378 residues: Tetraacyldisaccharide 4'-kinase (378 aa).

63–70 is an ATP binding site; the sequence is AVGGAGKT.

This sequence belongs to the LpxK family.

The catalysed reaction is a lipid A disaccharide + ATP = a lipid IVA + ADP + H(+). The protein operates within glycolipid biosynthesis; lipid IV(A) biosynthesis; lipid IV(A) from (3R)-3-hydroxytetradecanoyl-[acyl-carrier-protein] and UDP-N-acetyl-alpha-D-glucosamine: step 6/6. Functionally, transfers the gamma-phosphate of ATP to the 4'-position of a tetraacyldisaccharide 1-phosphate intermediate (termed DS-1-P) to form tetraacyldisaccharide 1,4'-bis-phosphate (lipid IVA). This is Tetraacyldisaccharide 4'-kinase from Anaeromyxobacter sp. (strain K).